The following is a 139-amino-acid chain: Glutamate mutase sigma subunit (139 aa).

Positions Lys4–Ala139 constitute a B12-binding domain. Adenosylcob(III)alamin contacts are provided by residues Ser14–Ala18, His17, Ser62–Leu64, and Asn94–Gly98.

This sequence belongs to the methylaspartate mutase GlmS subunit family. In terms of assembly, heterotetramer composed of 2 epsilon subunits (GlmE) and 2 sigma subunits (GlmS). GlmE exists as a homodimer and GlmS as a monomer. Adenosylcob(III)alamin serves as cofactor.

The enzyme catalyses (2S,3S)-3-methyl-L-aspartate = L-glutamate. Its pathway is amino-acid degradation; L-glutamate degradation via mesaconate pathway; acetate and pyruvate from L-glutamate: step 1/4. Catalyzes the carbon skeleton rearrangement of L-glutamate to L-threo-3-methylaspartate ((2S,3S)-3-methylaspartate). This is Glutamate mutase sigma subunit from Treponema denticola (strain ATCC 35405 / DSM 14222 / CIP 103919 / JCM 8153 / KCTC 15104).